The sequence spans 290 residues: Agglutinin-2 (290 aa).

Positions 1–35 (MAISNTNLLQTKKPISLPLLAFITLFLMLLNRVNS) are cleaved as a signal peptide. The N-linked (GlcNAc...) asparagine glycan is linked to asparagine 155. Residues glutamate 165 and aspartate 167 each coordinate Mn(2+). Aspartate 167, asparagine 171, and aspartate 175 together coordinate Ca(2+). 2 residues coordinate Mn(2+): aspartate 175 and histidine 180. Asparagine 200 carries an N-linked (GlcNAc...) asparagine glycan.

This sequence belongs to the leguminous lectin family. As to quaternary structure, homotetramer.

Functionally, mannose/glucose binding bark lectin. Its function is as follows. Bark lectins are storage proteins that probably maintain stocks of nitrogen during dormant period. Self-aggregatable molecules that can bind their own carbohydrate side chains. They could also play a role in the plant's defense against phytophagous invertebrates or herbivorous higher animals. The sequence is that of Agglutinin-2 from Cladrastis kentukea (Yellow wood).